Reading from the N-terminus, the 303-residue chain is Large ribosomal subunit protein uL18 (303 aa).

The protein belongs to the universal ribosomal protein uL18 family. As to quaternary structure, component of the large ribosomal subunit (LSU).

The protein localises to the cytoplasm. Its subcellular location is the nucleus. Component of the ribosome, a large ribonucleoprotein complex responsible for the synthesis of proteins in the cell. The small ribosomal subunit (SSU) binds messenger RNAs (mRNAs) and translates the encoded message by selecting cognate aminoacyl-transfer RNA (tRNA) molecules. The large subunit (LSU) contains the ribosomal catalytic site termed the peptidyl transferase center (PTC), which catalyzes the formation of peptide bonds, thereby polymerizing the amino acids delivered by tRNAs into a polypeptide chain. The nascent polypeptides leave the ribosome through a tunnel in the LSU and interact with protein factors that function in enzymatic processing, targeting, and the membrane insertion of nascent chains at the exit of the ribosomal tunnel. The protein is Large ribosomal subunit protein uL18 (RPL5) of Oikopleura dioica (Tunicate).